A 368-amino-acid polypeptide reads, in one-letter code: Germination protease (368 aa).

A propeptide spanning residues 1-16 (MEKKKLDLSQYAVRTD) is cleaved from the precursor.

It belongs to the peptidase A25 family. Homotetramer. In terms of processing, autoproteolytically processed. The inactive tetrameric zymogen termed p46 autoprocesses to a smaller form termed p41, which is active only during spore germination.

The enzyme catalyses Endopeptidase action with P4 Glu or Asp, P1 preferably Glu &gt; Asp, P1' hydrophobic and P2' Ala.. Its function is as follows. Initiates the rapid degradation of small, acid-soluble proteins during spore germination. The chain is Germination protease from Bacillus licheniformis (strain ATCC 14580 / DSM 13 / JCM 2505 / CCUG 7422 / NBRC 12200 / NCIMB 9375 / NCTC 10341 / NRRL NRS-1264 / Gibson 46).